The following is a 207-amino-acid chain: LexA repressor (207 aa).

A DNA-binding region (H-T-H motif) is located at residues 28–48 (VREIAVAVGLASSSTVHGHLE). Catalysis depends on for autocatalytic cleavage activity residues Ser129 and Lys167.

It belongs to the peptidase S24 family. Homodimer.

The enzyme catalyses Hydrolysis of Ala-|-Gly bond in repressor LexA.. Its function is as follows. Represses a number of genes involved in the response to DNA damage (SOS response), including recA and lexA. In the presence of single-stranded DNA, RecA interacts with LexA causing an autocatalytic cleavage which disrupts the DNA-binding part of LexA, leading to derepression of the SOS regulon and eventually DNA repair. This chain is LexA repressor, found in Oceanobacillus iheyensis (strain DSM 14371 / CIP 107618 / JCM 11309 / KCTC 3954 / HTE831).